The chain runs to 206 residues: Small ribosomal subunit protein uS4 (206 aa).

The S4 RNA-binding domain occupies 96–156 (CRLDNVVYRM…EKSLGQLRIV (61 aa)).

Belongs to the universal ribosomal protein uS4 family. Part of the 30S ribosomal subunit. Contacts protein S5. The interaction surface between S4 and S5 is involved in control of translational fidelity.

One of the primary rRNA binding proteins, it binds directly to 16S rRNA where it nucleates assembly of the body of the 30S subunit. In terms of biological role, with S5 and S12 plays an important role in translational accuracy. The chain is Small ribosomal subunit protein uS4 from Pseudomonas putida (strain ATCC 47054 / DSM 6125 / CFBP 8728 / NCIMB 11950 / KT2440).